Here is a 423-residue protein sequence, read N- to C-terminus: Cell adhesion molecule CEACAM16 (423 aa).

An N-terminal signal peptide occupies residues 1–22; it reads MKMPLTWGSWFLLSAWILNAGA. Residue Asn38 is glycosylated (N-linked (GlcNAc...) asparagine). The disordered stretch occupies residues 77–96; that stretch reads ETPGPAHTGREAVRPDGSLD. Residues 84 to 95 show a composition bias toward basic and acidic residues; sequence TGREAVRPDGSL. Ig-like C2-type domains are found at residues 134 to 219 and 224 to 310; these read PPTV…LNLT and PERV…ASVV. Cysteines 155 and 202 form a disulfide. Residue Asn217 is glycosylated (N-linked (GlcNAc...) asparagine). Cys253 and Cys294 are disulfide-bonded.

The protein belongs to the immunoglobulin superfamily. CEA family. Homooligomer; can for homodimers and homotetramers. Interacts with TECTA and TECTB.

The protein localises to the secreted. Its function is as follows. Required for proper hearing, plays a role in maintaining the integrity of the tectorial membrane. The sequence is that of Cell adhesion molecule CEACAM16 from Rattus norvegicus (Rat).